Reading from the N-terminus, the 156-residue chain is Cyanate hydratase (156 aa).

Active-site residues include arginine 96, glutamate 99, and serine 122.

Belongs to the cyanase family.

It catalyses the reaction cyanate + hydrogencarbonate + 3 H(+) = NH4(+) + 2 CO2. Catalyzes the reaction of cyanate with bicarbonate to produce ammonia and carbon dioxide. The polypeptide is Cyanate hydratase (Photorhabdus laumondii subsp. laumondii (strain DSM 15139 / CIP 105565 / TT01) (Photorhabdus luminescens subsp. laumondii)).